Reading from the N-terminus, the 156-residue chain is Ecotin (156 aa).

The first 19 residues, Met-1–Ala-19, serve as a signal peptide directing secretion. A disulfide bond links Cys-65 and Cys-102.

This sequence belongs to the protease inhibitor I11 (ecotin) family. As to quaternary structure, homodimer.

It localises to the periplasm. Its function is as follows. General inhibitor of family S1 serine proteases. The chain is Ecotin from Pseudomonas aeruginosa (strain ATCC 15692 / DSM 22644 / CIP 104116 / JCM 14847 / LMG 12228 / 1C / PRS 101 / PAO1).